Consider the following 428-residue polypeptide: Light-independent protochlorophyllide reductase subunit N (428 aa).

The [4Fe-4S] cluster site is built by Cys-31, Cys-56, and Cys-117.

Belongs to the BchN/ChlN family. Protochlorophyllide reductase is composed of three subunits; BchL, BchN and BchB. Forms a heterotetramer of two BchB and two BchN subunits. Requires [4Fe-4S] cluster as cofactor.

The enzyme catalyses chlorophyllide a + oxidized 2[4Fe-4S]-[ferredoxin] + 2 ADP + 2 phosphate = protochlorophyllide a + reduced 2[4Fe-4S]-[ferredoxin] + 2 ATP + 2 H2O. Its pathway is porphyrin-containing compound metabolism; bacteriochlorophyll biosynthesis (light-independent). Its function is as follows. Component of the dark-operative protochlorophyllide reductase (DPOR) that uses Mg-ATP and reduced ferredoxin to reduce ring D of protochlorophyllide (Pchlide) to form chlorophyllide a (Chlide). This reaction is light-independent. The NB-protein (BchN-BchB) is the catalytic component of the complex. In Rhodopseudomonas palustris (strain BisB18), this protein is Light-independent protochlorophyllide reductase subunit N.